The sequence spans 214 residues: Somatotropin-A (214 aa).

Positions 1–25 (MATGFCSSFGLLVVLLLKNVADVGA) are cleaved as a signal peptide. 2 disulfides stabilise this stretch: Cys-77–Cys-187 and Cys-204–Cys-212.

It belongs to the somatotropin/prolactin family.

It is found in the secreted. Functionally, growth hormone plays an important role in growth control. This chain is Somatotropin-A (gh-a), found in Xenopus laevis (African clawed frog).